Here is a 115-residue protein sequence, read N- to C-terminus: Methylmalonyl-CoA decarboxylase subunit delta (115 aa).

Residues 11 to 31 (WLIMAINMTVVFAVLIALGIL) traverse the membrane as a helical segment. The tract at residues 46 to 70 (EAPAATAPVATPTATPVAPANASAQ) is disordered. Residues 48–65 (PAATAPVATPTATPVAPA) show a composition bias toward low complexity.

Belongs to the OadG family. As to quaternary structure, the methylmalonyl-CoA decarboxylase is composed of five subunits: the carboxyltransferase alpha subunit (MmdA), the tunnel beta subunit (MmdB), the biotin-containing gamma subunit (MmdC), and the delta (MmdD) and epsilon (MmdE) subunits. Post-translationally, the N-terminus is blocked.

It is found in the cell membrane. The catalysed reaction is (S)-methylmalonyl-CoA + Na(+)(in) + H(+)(out) = propanoyl-CoA + Na(+)(out) + CO2. With respect to regulation, completely inhibited by avidin. In terms of biological role, subunit of the sodium ion pump methylmalonyl-CoA decarboxylase, which converts the chemical energy of a decarboxylation reaction into an electrochemical gradient of Na(+) ions across the cytoplasmic membrane, thereby creating a sodium ion motive force that is used for ATP synthesis. The delta subunit is required for catalytic activity as well as for the proper assembly of the individual subunits to an enzyme complex. Can also convert malonyl-CoA into acetyl-CoA. In Veillonella parvula (Staphylococcus parvulus), this protein is Methylmalonyl-CoA decarboxylase subunit delta.